The sequence spans 549 residues: Threonine--tRNA ligase catalytic subunit (549 aa).

Positions 142–437 are catalytic; the sequence is DHRIIGDRLD…LLEHFRGKLP (296 aa). Residues C235, H286, and H414 each contribute to the Zn(2+) site.

It belongs to the class-II aminoacyl-tRNA synthetase family. In terms of assembly, homodimer. Probably interacts with its editing subunit. Zn(2+) serves as cofactor.

The protein resides in the cytoplasm. The catalysed reaction is tRNA(Thr) + L-threonine + ATP = L-threonyl-tRNA(Thr) + AMP + diphosphate + H(+). Functionally, catalyzes the attachment of threonine to tRNA(Thr) in a two-step reaction: L-threonine is first activated by ATP to form Thr-AMP and then transferred to the acceptor end of tRNA(Thr). Also activates L-serine and transfers it to tRNA(Thr) but cannot deacylate incorrectly charged amino acid; unlike most archaea the editing function is found in a freestanding protein. The chain is Threonine--tRNA ligase catalytic subunit from Sulfolobus acidocaldarius (strain ATCC 33909 / DSM 639 / JCM 8929 / NBRC 15157 / NCIMB 11770).